We begin with the raw amino-acid sequence, 596 residues long: Membrane protein insertase YidC (596 aa).

Helical transmembrane passes span 4-24, 332-352, 359-379, 425-445, 468-488, and 518-538; these read NKLIGLILISILLIVYTHFFD, LGWPIVKWINLYLIIPIFSFI, YGLVILILVIFIKLLLLPLSY, LSGCIPVLLQMPILLAMFNFF, IINLPFQIPFYGSHVSLFTLL, and PITFMFILNSFPAGLSFYYFV. Residues 565–584 are compositionally biased toward basic and acidic residues; it reads KNKEKSANNKEGSFKKRFQD. The disordered stretch occupies residues 565-596; sequence KNKEKSANNKEGSFKKRFQDAIKASASHKGKK.

This sequence belongs to the OXA1/ALB3/YidC family. Type 1 subfamily. As to quaternary structure, interacts with the Sec translocase complex via SecD. Specifically interacts with transmembrane segments of nascent integral membrane proteins during membrane integration.

It is found in the cell inner membrane. Required for the insertion and/or proper folding and/or complex formation of integral membrane proteins into the membrane. Involved in integration of membrane proteins that insert both dependently and independently of the Sec translocase complex, as well as at least some lipoproteins. Aids folding of multispanning membrane proteins. The protein is Membrane protein insertase YidC of Amoebophilus asiaticus (strain 5a2).